A 55-amino-acid polypeptide reads, in one-letter code: Large ribosomal subunit protein bL33 (55 aa).

The protein belongs to the bacterial ribosomal protein bL33 family.

The protein is Large ribosomal subunit protein bL33 of Rhodopseudomonas palustris (strain BisA53).